The sequence spans 239 residues: Norbelladine 4'-O-methyltransferase 3 (239 aa).

S-adenosyl-L-methionine is bound by residues valine 55, glutamate 77, 79 to 80, serine 85, aspartate 103, and alanine 132; that span reads GV. A divalent metal cation is bound at residue aspartate 155. Aspartate 157 contributes to the S-adenosyl-L-methionine binding site. Residues aspartate 181 and asparagine 182 each coordinate a divalent metal cation.

It belongs to the class I-like SAM-binding methyltransferase superfamily. Cation-dependent O-methyltransferase family. Mg(2+) is required as a cofactor.

It carries out the reaction norbelladine + S-adenosyl-L-methionine = 4'-O-methylnorbelladine + S-adenosyl-L-homocysteine + H(+). The protein operates within alkaloid biosynthesis. Functionally, 4'-O-methyltransferase converting norbelladine to 4'-O-methylnorbelladine. 4'-O-methylnorbelladine is a precursor to all Amaryllidaceae alkaloids such as galanthamine, lycorine and haemanthamine, and including haemanthamine- and crinamine-type alkaloids, promising anticancer agents. The chain is Norbelladine 4'-O-methyltransferase 3 from Narcissus aff. pseudonarcissus MK-2014 (Daffodil).